A 296-amino-acid chain; its full sequence is 4-hydroxy-tetrahydrodipicolinate synthase (296 aa).

Threonine 49 is a pyruvate binding site. The active-site Proton donor/acceptor is the tyrosine 137. Lysine 166 functions as the Schiff-base intermediate with substrate in the catalytic mechanism. Residue isoleucine 208 coordinates pyruvate.

It belongs to the DapA family. As to quaternary structure, homotetramer; dimer of dimers.

The protein localises to the cytoplasm. It carries out the reaction L-aspartate 4-semialdehyde + pyruvate = (2S,4S)-4-hydroxy-2,3,4,5-tetrahydrodipicolinate + H2O + H(+). Its pathway is amino-acid biosynthesis; L-lysine biosynthesis via DAP pathway; (S)-tetrahydrodipicolinate from L-aspartate: step 3/4. Catalyzes the condensation of (S)-aspartate-beta-semialdehyde [(S)-ASA] and pyruvate to 4-hydroxy-tetrahydrodipicolinate (HTPA). In Pelodictyon phaeoclathratiforme (strain DSM 5477 / BU-1), this protein is 4-hydroxy-tetrahydrodipicolinate synthase.